The following is a 1104-amino-acid chain: Collagenase ColA (1104 aa).

An N-terminal signal peptide occupies residues 1–39 (MKKNLKRGELTKLKLVERWSATFTLAAFILFNSSFKVLA). A propeptide spanning residues 40-86 (ADKKVENSNNGQITREINADQISKTELNNEVATDNNRPLGPSIAPSR) is cleaved from the precursor. The segment at 87–761 (ARNNKIYTFD…YVYDVVFHGM (675 aa)) is S1 metalloprotease domain. Residues 93–367 (YTFDELNRMN…AANDLDLNFG (275 aa)) are activator domain. The interval 377-646 (DFNKIKADAR…MDSLLNNIDN (270 aa)) is catalytic subdomain. Residue Glu477 participates in Ca(2+) binding. Residue His502 participates in Zn(2+) binding. The active site involves Glu503. Zn(2+) is bound at residue His506. Ca(2+) is bound by residues Gly510, Val514, and Gly516. Glu534 provides a ligand contact to Zn(2+). The interval 654–767 (DEYVNGHEAK…FHGMNTDTNT (114 aa)) is helper subdomain. Residues 762–860 (NTDTNTDVHV…KKIKVVEDKP (99 aa)) are S2 domain. Ca(2+) is bound by residues Asn772, Lys773, Asp800, Asp802, Asp841, Glu866, Glu868, Asn870, Asp894, Asp897, Glu993, Glu995, Asn997, Leu1016, Asp1020, Lys1022, and Asp1023. Residues 774 to 862 (EPKAVIKSDS…IKVVEDKPVE (89 aa)) form the PKD domain. Residues 865–979 (NESEPNNDFE…TYTVNVKGNL (115 aa)) form an S3a collagen-binding domain region. An S3b collagen-binding domain region spans residues 992 to 1104 (KEVENNNDFD…GNYIVNLQNK (113 aa)).

This sequence belongs to the peptidase M9B family. Collagenase subfamily. The cofactor is Ca(2+). Zn(2+) is required as a cofactor.

Its subcellular location is the secreted. It catalyses the reaction Digestion of native collagen in the triple helical region at Xaa-|-Gly bonds. With synthetic peptides, a preference is shown for Gly at P3 and P1', Pro and Ala at P2 and P2', and hydroxyproline, Ala or Arg at P3'.. Its function is as follows. Clostridial collagenases are among the most efficient degraders of eukaryotic collagen known; saprophytes use collagen as a carbon source while pathogens additionally digest collagen to aid in host colonization. Has both tripeptidylcarboxypeptidase on Gly-X-Y and endopeptidase activities; the endopeptidase cuts within the triple helix region of collagen while tripeptidylcarboxypeptidase successively digests the exposed ends, thus clostridial collagenases can digest large sections of collagen. The sequence is that of Collagenase ColA (colA) from Clostridium perfringens (strain 13 / Type A).